A 271-amino-acid polypeptide reads, in one-letter code: Protein PXR1 (271 aa).

The 48-residue stretch at 25-72 (TSRFGHQFLEKFGWKPGMGLGLYPMNSNTSHIKVSIKDDNVGLGAKLK) folds into the G-patch domain. The disordered stretch occupies residues 147 to 239 (SNAKKRKREG…SASNIPDAVN (93 aa)). Residues 157-168 (DDSEDEDDDDKE) show a composition bias toward acidic residues. The span at 175–203 (KKHKKHKKHKKDKKKDKKDKKEHKKHKKE) shows a compositional bias: basic residues. Over residues 204 to 221 (EKRLKKEKRAEKTKETKK) the composition is skewed to basic and acidic residues. Position 230 is a phosphoserine (Ser230).

The protein belongs to the PINX1 family. As to quaternary structure, interacts with EST2.

The protein resides in the nucleus. The protein localises to the nucleolus. In terms of biological role, involved in rRNA-processing at A0, A1 and A2 sites through its action in U18 and U24 snoRNA 3'-end final trimming. Negative regulator of telomerase throughX competition for binding to EST2 with TLC1. In Saccharomyces cerevisiae (strain YJM789) (Baker's yeast), this protein is Protein PXR1 (PXR1).